Here is a 197-residue protein sequence, read N- to C-terminus: Protein TIFY 9 (197 aa).

Residues 57–73 are compositionally biased toward polar residues; the sequence is STGNNSDSSAKSRSVPS. Positions 57-84 are disordered; the sequence is STGNNSDSSAKSRSVPSTPREDQPQIPI. In terms of domain architecture, Tify spans 98-132; sequence LVSGTVPMTIFYNGSVSVFQVSRNKAGEIMKVANE. The short motif at 168-193 is the Jas element; the sequence is PIARRKSLQRFLEKRKERLVSTSPYY. The short motif at 170-177 is the Nuclear localization signal element; that stretch reads ARRKSLQR.

Belongs to the TIFY/JAZ family. In terms of assembly, homo- and heterodimer. Interacts with MYC2, MYC3, MYC4, AFPH2/NINJA, TIFY10A/JAZ1, TIFY10B/JAZ2, TIFY6B/JAZ3, TIFY6A/JAZ4, TIFY11B/JAZ6, TIFY5A/JAZ8, TIFY7/JAZ9, TIFY3A/JAZ11 and TIFY3B/JAZ12. Isoform 1 and isoform 2 interact with COI1. Isoform 3 does not interact with COI1. Interacts with RHD6 and RSL1. Post-translationally, ubiquitinated. Targeted for degradation by the SCF(COI1) E3 ubiquitin ligase-proteasome pathway during jasmonate signaling.

It localises to the nucleus. Functionally, repressor of jasmonate (JA) responses that lacks the entire Jas domain and possesses severe JA insensitivity and resistance to JA-induced degradation. Acts as an endogenous repressor of JA signal output in JA-stimulated cells. Modulator of JA-controlled growth inhibition in response to wounding. In terms of biological role, repressor of jasmonate (JA) responses that lacks part of the Jas domain and possesses JA insensitivity and partial resistance to JA-induced degradation. Repressor of jasmonate (JA) responses. Interacts with and suppresses RHD6 and RSL1 transcription factor activities to negatively regulate jasmonate-stimulated root hair development. This Arabidopsis thaliana (Mouse-ear cress) protein is Protein TIFY 9 (TIFY9).